Reading from the N-terminus, the 220-residue chain is Pyridoxine/pyridoxamine 5'-phosphate oxidase (220 aa).

Substrate is bound by residues 8–11 (RKSY) and Lys66. FMN-binding positions include 61-66 (RVVLIK), 76-77 (FT), Arg82, and Lys83. 3 residues coordinate substrate: Tyr123, Arg127, and Ser131. FMN contacts are provided by residues 140–141 (QS) and Trp184. Position 190–192 (190–192 (RLH)) interacts with substrate. Arg194 contacts FMN.

This sequence belongs to the pyridoxamine 5'-phosphate oxidase family. Homodimer. The cofactor is FMN.

The catalysed reaction is pyridoxamine 5'-phosphate + O2 + H2O = pyridoxal 5'-phosphate + H2O2 + NH4(+). It carries out the reaction pyridoxine 5'-phosphate + O2 = pyridoxal 5'-phosphate + H2O2. Its pathway is cofactor metabolism; pyridoxal 5'-phosphate salvage; pyridoxal 5'-phosphate from pyridoxamine 5'-phosphate: step 1/1. It functions in the pathway cofactor metabolism; pyridoxal 5'-phosphate salvage; pyridoxal 5'-phosphate from pyridoxine 5'-phosphate: step 1/1. In terms of biological role, catalyzes the oxidation of either pyridoxine 5'-phosphate (PNP) or pyridoxamine 5'-phosphate (PMP) into pyridoxal 5'-phosphate (PLP). The polypeptide is Pyridoxine/pyridoxamine 5'-phosphate oxidase (Albidiferax ferrireducens (strain ATCC BAA-621 / DSM 15236 / T118) (Rhodoferax ferrireducens)).